The sequence spans 175 residues: Mitochondrial inner membrane protease subunit 2 (175 aa).

The helical transmembrane segment at 19-37 (FFVAVPVAVTFLDRVACVA) threads the bilayer. Catalysis depends on residues S43 and K91.

The protein belongs to the peptidase S26 family. IMP2 subfamily. In terms of assembly, heterodimer of 2 subunits, IMMPL1 and IMMPL2. Expressed in all tissues tested except adult liver and lung.

It is found in the mitochondrion inner membrane. Its function is as follows. Catalyzes the removal of transit peptides required for the targeting of proteins from the mitochondrial matrix, across the inner membrane, into the inter-membrane space. Known to process the nuclear encoded protein DIABLO. This chain is Mitochondrial inner membrane protease subunit 2 (IMMP2L), found in Homo sapiens (Human).